A 289-amino-acid chain; its full sequence is NAD(P)H-hydrate epimerase (289 aa).

Positions 71-277 (AQTIDNELMS…SIVEKYNLKV (207 aa)) constitute a YjeF N-terminal domain. 122-126 (NNGGD) serves as a coordination point for (6S)-NADPHX. Positions 123 and 185 each coordinate K(+). (6S)-NADPHX-binding positions include 189 to 195 (GFSFTGE) and D218. Position 221 (S221) interacts with K(+).

It belongs to the NnrE/AIBP family. The cofactor is K(+).

It catalyses the reaction (6R)-NADHX = (6S)-NADHX. The catalysed reaction is (6R)-NADPHX = (6S)-NADPHX. Catalyzes the epimerization of the S- and R-forms of NAD(P)HX, a damaged form of NAD(P)H that is a result of enzymatic or heat-dependent hydration. This is a prerequisite for the S-specific NAD(P)H-hydrate dehydratase to allow the repair of both epimers of NAD(P)HX. This chain is NAD(P)H-hydrate epimerase, found in Plasmodium vivax (strain Salvador I).